The following is a 194-amino-acid chain: Probable chorismate pyruvate-lyase (194 aa).

Positions 77, 115, and 176 each coordinate substrate.

It belongs to the UbiC family.

It localises to the cytoplasm. The catalysed reaction is chorismate = 4-hydroxybenzoate + pyruvate. Its pathway is cofactor biosynthesis; ubiquinone biosynthesis. In terms of biological role, removes the pyruvyl group from chorismate, with concomitant aromatization of the ring, to provide 4-hydroxybenzoate (4HB) for the ubiquinone pathway. The chain is Probable chorismate pyruvate-lyase from Cupriavidus pinatubonensis (strain JMP 134 / LMG 1197) (Cupriavidus necator (strain JMP 134)).